The sequence spans 446 residues: UPF0597 protein DvMF_1488 (446 aa).

This sequence belongs to the UPF0597 family.

This Nitratidesulfovibrio vulgaris (strain DSM 19637 / Miyazaki F) (Desulfovibrio vulgaris) protein is UPF0597 protein DvMF_1488.